Consider the following 487-residue polypeptide: Argininosuccinate lyase (487 aa).

The protein belongs to the lyase 1 family. Argininosuccinate lyase subfamily.

It localises to the cytoplasm. It carries out the reaction 2-(N(omega)-L-arginino)succinate = fumarate + L-arginine. It participates in amino-acid biosynthesis; L-arginine biosynthesis; L-arginine from L-ornithine and carbamoyl phosphate: step 3/3. The chain is Argininosuccinate lyase from Natranaerobius thermophilus (strain ATCC BAA-1301 / DSM 18059 / JW/NM-WN-LF).